Consider the following 242-residue polypeptide: MTISSNTALVLFSGGQDSATCLAWALSRFDRVETVGYAYGQRHAIELECRETLRNEMAAFSPDWKARLGEDHTIDLASLGALSETALTREAEIGLSENGLPNTFVPGRNIIFLTFAAALAARRNARHIVTGVCETDYSGYPDCRDDTIKALQVTLNLGMDQRFVLHTPLMWIDKAQTWDLTEELGGQKLVNLINRDSHSCYMGDRTHQHDWGYGCGTCPACNLRADGWRRYQQSRPSHGGAA.

Position 12–22 (12–22) interacts with ATP; it reads FSGGQDSATCL. Zn(2+)-binding residues include Cys200, Cys215, Cys218, and Cys221.

This sequence belongs to the QueC family. Zn(2+) serves as cofactor.

The catalysed reaction is 7-carboxy-7-deazaguanine + NH4(+) + ATP = 7-cyano-7-deazaguanine + ADP + phosphate + H2O + H(+). Its pathway is purine metabolism; 7-cyano-7-deazaguanine biosynthesis. In terms of biological role, catalyzes the ATP-dependent conversion of 7-carboxy-7-deazaguanine (CDG) to 7-cyano-7-deazaguanine (preQ(0)). The sequence is that of 7-cyano-7-deazaguanine synthase from Gluconobacter oxydans (strain 621H) (Gluconobacter suboxydans).